We begin with the raw amino-acid sequence, 1049 residues long: Desmoglein-1 (1049 aa).

Positions 1-23 (MDWSFFRVVAMLFIFLVVVEVNS) are cleaved as a signal peptide. A propeptide spanning residues 24-49 (EFRIQVRDYNTKNGTIKWHSIRRQKR) is cleaved from the precursor. Residues Asn-36, Asn-110, and Asn-180 are each glycosylated (N-linked (GlcNAc...) asparagine). 4 Cadherin domains span residues 50–158 (EWIK…PVFS), 159–270 (MATF…PYME), 271–385 (QSSY…GPVF), and 386–497 (RPGS…TEPN). The Extracellular segment spans residues 50–548 (EWIKFAAACR…LLSDNVHFGP (499 aa)). The disordered stretch occupies residues 485–534 (SFGNDDRTNTEPNTKITTNTGRQESTSSTNYDTSTTSTDSSQVYSSEPGN). Polar residues predominate over residues 494–508 (TEPNTKITTNTGRQE). Residues 509-530 (STSSTNYDTSTTSTDSSQVYSS) are compositionally biased toward low complexity. The helical transmembrane segment at 549–569 (AGIGLLIMGFLVLGLVPFLMI) threads the bilayer. Over 570-1049 (CCDCGGAPRS…TKYSTVQYSK (480 aa)) the chain is Cytoplasmic. At Ser-579 the chain carries Phosphoserine. Desmoglein repeat repeat units lie at residues 813-839 (TYPS…TVTE), 840-869 (SYTT…ERVV), 870-899 (GPIS…ERVI), 900-927 (APSS…ERVI), and 928-956 (QPTS…ERVV). The interval 1014–1035 (HMRSSSDHHFNQTIGSASPSTA) is disordered. Over residues 1024–1035 (NQTIGSASPSTA) the composition is skewed to polar residues.

As to quaternary structure, binds to JUP/plakoglobin. Interacts with PKP2. Interacts with DSC3; there is evidence to suggest that the interaction promotes cell-cell adhesion of keratinocytes. (Microbial infection) Interacts with Staphylococcus aureus protein SdrD; this interaction increases S.aureus adherence to keratinocytes. In terms of tissue distribution, expressed in all suprabasal layers of the epidermis, with the highest expression seen in the granular layer (at protein level).

The protein localises to the cell membrane. It localises to the cell junction. It is found in the desmosome. The protein resides in the cytoplasm. Its subcellular location is the nucleus. Component of intercellular desmosome junctions. Involved in the interaction of plaque proteins and intermediate filaments mediating cell-cell adhesion. This is Desmoglein-1 (DSG1) from Homo sapiens (Human).